The primary structure comprises 505 residues: Apolipoprotein N-acyltransferase (505 aa).

A run of 6 helical transmembrane segments spans residues 23 to 43 (LLAL…AVLY), 58 to 78 (GWWF…VSMN), 85 to 105 (PLLA…FFAL), 125 to 145 (LCFA…LTGF), 162 to 182 (LAPL…AALL), and 192 to 212 (PSFL…GLAL). The CN hydrolase domain maps to 230–469 (IQGNVEQDLK…QAVLYGEVVP (240 aa)). Glu-269 functions as the Proton acceptor in the catalytic mechanism. Residue Lys-329 is part of the active site. Catalysis depends on Cys-381, which acts as the Nucleophile. The chain crosses the membrane as a helical span at residues 482 to 502 (WPLAIVCALLLGWALLAGRIA).

This sequence belongs to the CN hydrolase family. Apolipoprotein N-acyltransferase subfamily.

Its subcellular location is the cell inner membrane. It carries out the reaction N-terminal S-1,2-diacyl-sn-glyceryl-L-cysteinyl-[lipoprotein] + a glycerophospholipid = N-acyl-S-1,2-diacyl-sn-glyceryl-L-cysteinyl-[lipoprotein] + a 2-acyl-sn-glycero-3-phospholipid + H(+). Its pathway is protein modification; lipoprotein biosynthesis (N-acyl transfer). Its function is as follows. Catalyzes the phospholipid dependent N-acylation of the N-terminal cysteine of apolipoprotein, the last step in lipoprotein maturation. This Pseudomonas putida (strain ATCC 47054 / DSM 6125 / CFBP 8728 / NCIMB 11950 / KT2440) protein is Apolipoprotein N-acyltransferase.